The sequence spans 150 residues: Ribosome maturation factor RimP (150 aa).

The protein belongs to the RimP family.

It localises to the cytoplasm. Required for maturation of 30S ribosomal subunits. The sequence is that of Ribosome maturation factor RimP from Yersinia pestis bv. Antiqua (strain Antiqua).